A 259-amino-acid chain; its full sequence is Secretion system apparatus protein SsaT (259 aa).

The next 6 helical transmembrane spans lie at 9–29, 35–55, 78–98, 127–147, 185–205, and 214–234; these read LIAL…LPLL, GAAL…LPII, VIIG…VDMA, LLFS…EFIL, ISFS…LGLL, and VFFF…LISF.

This sequence belongs to the FliR/MopE/SpaR family.

It is found in the cell membrane. Part of a type III secretion system. In Salmonella typhimurium (strain LT2 / SGSC1412 / ATCC 700720), this protein is Secretion system apparatus protein SsaT (ssaT).